Consider the following 66-residue polypeptide: Large ribosomal subunit protein uL29 (66 aa).

This sequence belongs to the universal ribosomal protein uL29 family.

This is Large ribosomal subunit protein uL29 from Rhizobium etli (strain ATCC 51251 / DSM 11541 / JCM 21823 / NBRC 15573 / CFN 42).